A 441-amino-acid chain; its full sequence is Transcriptional regulatory protein ZraR (441 aa).

Positions 7-121 constitute a Response regulatory domain; it reads DILVVDDDIS…NLQATLEKAL (115 aa). Asp-56 carries the post-translational modification 4-aspartylphosphate. Positions 141–370 constitute a Sigma-54 factor interaction domain; that stretch reads MVGKSPAMQH…LENAVERAVV (230 aa). Residues Gly-172, Thr-173, Arg-329, and Arg-359 each coordinate ATP. The H-T-H motif DNA-binding region spans 421–440; it reads KTEAARQLGITRKTLLAKLS.

As to quaternary structure, monomer. In terms of processing, phosphorylated by ZraS.

The protein localises to the cytoplasm. Activity of the ZraS/ZraR two-component system is repressed by the zinc-bound form of ZraP, which probably interacts with the periplasmic region of ZraS. Its function is as follows. Part of the Zra signaling pathway, an envelope stress response (ESR) system composed of the periplasmic accessory protein ZraP, the histidine kinase ZraS and the transcriptional regulator ZraR. The ZraPSR system contributes to antibiotic resistance and is important for membrane integrity in the presence of membrane-targeting biocides. ZraR is a member of the two-component regulatory system ZraS/ZraR. When activated by ZraS, acts in conjunction with sigma-54 to regulate the expression of zraP in the presence of high Zn(2+) or Pb(2+) concentrations. Also positively autoregulates the expression of the zraSR operon. Binds to a region within the zraP-zraSR intergenic region that is characterized by two inverted repeats separated by a 14 bp spacer. In addition, controls a regulon of genes of diverse functions that may be critical to maintain envelope integrity and cell survival under stressful conditions. The system has no direct role in zinc or copper resistance. This Escherichia coli (strain K12) protein is Transcriptional regulatory protein ZraR.